The primary structure comprises 210 residues: Thiamine-phosphate synthase (210 aa).

4-amino-2-methyl-5-(diphosphooxymethyl)pyrimidine contacts are provided by residues 39-43 (QLREK) and asparagine 71. Positions 72 and 91 each coordinate Mg(2+). Serine 110 contacts 4-amino-2-methyl-5-(diphosphooxymethyl)pyrimidine. Position 134-136 (134-136 (TPT)) interacts with 2-[(2R,5Z)-2-carboxy-4-methylthiazol-5(2H)-ylidene]ethyl phosphate. Lysine 137 is a binding site for 4-amino-2-methyl-5-(diphosphooxymethyl)pyrimidine. Glycine 163 serves as a coordination point for 2-[(2R,5Z)-2-carboxy-4-methylthiazol-5(2H)-ylidene]ethyl phosphate.

The protein belongs to the thiamine-phosphate synthase family. The cofactor is Mg(2+).

It catalyses the reaction 2-[(2R,5Z)-2-carboxy-4-methylthiazol-5(2H)-ylidene]ethyl phosphate + 4-amino-2-methyl-5-(diphosphooxymethyl)pyrimidine + 2 H(+) = thiamine phosphate + CO2 + diphosphate. It carries out the reaction 2-(2-carboxy-4-methylthiazol-5-yl)ethyl phosphate + 4-amino-2-methyl-5-(diphosphooxymethyl)pyrimidine + 2 H(+) = thiamine phosphate + CO2 + diphosphate. The catalysed reaction is 4-methyl-5-(2-phosphooxyethyl)-thiazole + 4-amino-2-methyl-5-(diphosphooxymethyl)pyrimidine + H(+) = thiamine phosphate + diphosphate. The protein operates within cofactor biosynthesis; thiamine diphosphate biosynthesis; thiamine phosphate from 4-amino-2-methyl-5-diphosphomethylpyrimidine and 4-methyl-5-(2-phosphoethyl)-thiazole: step 1/1. Condenses 4-methyl-5-(beta-hydroxyethyl)thiazole monophosphate (THZ-P) and 2-methyl-4-amino-5-hydroxymethyl pyrimidine pyrophosphate (HMP-PP) to form thiamine monophosphate (TMP). In Campylobacter jejuni subsp. jejuni serotype O:6 (strain 81116 / NCTC 11828), this protein is Thiamine-phosphate synthase.